Consider the following 114-residue polypeptide: Probable 4-amino-4-deoxy-L-arabinose-phosphoundecaprenol flippase subunit ArnE (114 aa).

The next 3 membrane-spanning stretches (helical) occupy residues 41 to 61, 64 to 84, and 91 to 111; these read MWLW…LLVL, MDVG…TLVG, and PVDP…FQLG.

The protein belongs to the ArnE family. Heterodimer of ArnE and ArnF.

Its subcellular location is the cell inner membrane. It participates in bacterial outer membrane biogenesis; lipopolysaccharide biosynthesis. Functionally, translocates 4-amino-4-deoxy-L-arabinose-phosphoundecaprenol (alpha-L-Ara4N-phosphoundecaprenol) from the cytoplasmic to the periplasmic side of the inner membrane. In Pseudomonas savastanoi pv. phaseolicola (strain 1448A / Race 6) (Pseudomonas syringae pv. phaseolicola (strain 1448A / Race 6)), this protein is Probable 4-amino-4-deoxy-L-arabinose-phosphoundecaprenol flippase subunit ArnE.